The sequence spans 96 residues: UPF0235 protein CAB243 (96 aa).

The protein belongs to the UPF0235 family.

The protein is UPF0235 protein CAB243 of Chlamydia abortus (strain DSM 27085 / S26/3) (Chlamydophila abortus).